Reading from the N-terminus, the 233-residue chain is Large ribosomal subunit protein uL1 (233 aa).

The protein belongs to the universal ribosomal protein uL1 family. As to quaternary structure, part of the 50S ribosomal subunit.

In terms of biological role, binds directly to 23S rRNA. The L1 stalk is quite mobile in the ribosome, and is involved in E site tRNA release. Protein L1 is also a translational repressor protein, it controls the translation of the L11 operon by binding to its mRNA. The protein is Large ribosomal subunit protein uL1 of Brucella anthropi (strain ATCC 49188 / DSM 6882 / CCUG 24695 / JCM 21032 / LMG 3331 / NBRC 15819 / NCTC 12168 / Alc 37) (Ochrobactrum anthropi).